Reading from the N-terminus, the 46-residue chain is Ligatoxin-B (46 aa).

3 disulfide bridges follow: Cys3–Cys40, Cys4–Cys32, and Cys16–Cys26.

The protein belongs to the plant thionin (TC 1.C.44) family.

Its subcellular location is the secreted. In terms of biological role, thionins are small plant proteins which are toxic to animal cells. They seem to exert their toxic effect at the level of the cell membrane. Their precise function is not known. The sequence is that of Ligatoxin-B from Phoradendron liga (Argentine mistletoe).